A 555-amino-acid chain; its full sequence is Oxygen-dependent choline dehydrogenase (555 aa).

Residue Asp4 to Glu33 participates in FAD binding. Positions Gln180–Arg202 are disordered. Residue His473 is the Proton acceptor of the active site.

This sequence belongs to the GMC oxidoreductase family. The cofactor is FAD.

The enzyme catalyses choline + A = betaine aldehyde + AH2. The catalysed reaction is betaine aldehyde + NAD(+) + H2O = glycine betaine + NADH + 2 H(+). It functions in the pathway amine and polyamine biosynthesis; betaine biosynthesis via choline pathway; betaine aldehyde from choline (cytochrome c reductase route): step 1/1. In terms of biological role, involved in the biosynthesis of the osmoprotectant glycine betaine. Catalyzes the oxidation of choline to betaine aldehyde and betaine aldehyde to glycine betaine at the same rate. This Serratia proteamaculans (strain 568) protein is Oxygen-dependent choline dehydrogenase.